A 202-amino-acid chain; its full sequence is Orotate phosphoribosyltransferase (202 aa).

Residue 113 to 121 (EDIITTGGS) participates in 5-phospho-alpha-D-ribose 1-diphosphate binding. Positions 117 and 145 each coordinate orotate.

The protein belongs to the purine/pyrimidine phosphoribosyltransferase family. PyrE subfamily. As to quaternary structure, homodimer. It depends on Mg(2+) as a cofactor.

The catalysed reaction is orotidine 5'-phosphate + diphosphate = orotate + 5-phospho-alpha-D-ribose 1-diphosphate. It functions in the pathway pyrimidine metabolism; UMP biosynthesis via de novo pathway; UMP from orotate: step 1/2. Catalyzes the transfer of a ribosyl phosphate group from 5-phosphoribose 1-diphosphate to orotate, leading to the formation of orotidine monophosphate (OMP). The protein is Orotate phosphoribosyltransferase of Campylobacter lari (strain RM2100 / D67 / ATCC BAA-1060).